A 385-amino-acid chain; its full sequence is Glycerol-3-phosphate dehydrogenase [NAD(+)] 1 (385 aa).

NAD(+)-binding positions include 29 to 34, phenylalanine 121, lysine 144, and alanine 177; that span reads GSGNWG. Lysine 144 contributes to the substrate binding site. Residue lysine 232 is the Proton acceptor of the active site. Residues arginine 296 and glutamine 325 each contribute to the NAD(+) site. Substrate is bound at residue 296–297; it reads RN. Serine 376 carries the phosphoserine modification. Phosphothreonine is present on threonine 382.

The protein belongs to the NAD-dependent glycerol-3-phosphate dehydrogenase family.

The protein resides in the cytoplasm. The catalysed reaction is sn-glycerol 3-phosphate + NAD(+) = dihydroxyacetone phosphate + NADH + H(+). The chain is Glycerol-3-phosphate dehydrogenase [NAD(+)] 1 (gpd1) from Schizosaccharomyces pombe (strain 972 / ATCC 24843) (Fission yeast).